The following is a 617-amino-acid chain: BTB/POZ domain-containing protein At3g08570 (617 aa).

A BTB domain is found at 36–106; that stretch reads GDITIVVDGE…CYGINFEITI (71 aa). An NPH3 domain is found at 210–490; that stretch reads EWWIEDLSAL…VRVLYSEQLR (281 aa). Phosphotyrosine is present on Tyr-431. Disordered stretches follow at residues 505–525 and 585–617; these read LSSQ…RDTY and GGGP…ESMF. Residues 602-617 show a composition bias toward basic and acidic residues; that stretch reads SRLERKTVRSRPESMF.

It belongs to the NPH3 family.

The protein operates within protein modification; protein ubiquitination. May act as a substrate-specific adapter of an E3 ubiquitin-protein ligase complex (CUL3-RBX1-BTB) which mediates the ubiquitination and subsequent proteasomal degradation of target proteins. The polypeptide is BTB/POZ domain-containing protein At3g08570 (Arabidopsis thaliana (Mouse-ear cress)).